A 937-amino-acid chain; its full sequence is Leucine--tRNA ligase (937 aa).

Positions 34-44 (PYPSGAMHIGH) match the 'HIGH' region motif. The 'KMSKS' region motif lies at 609–613 (KMSSS).

It belongs to the class-I aminoacyl-tRNA synthetase family.

The protein resides in the cytoplasm. The enzyme catalyses tRNA(Leu) + L-leucine + ATP = L-leucyl-tRNA(Leu) + AMP + diphosphate. The sequence is that of Leucine--tRNA ligase from Methanothermobacter thermautotrophicus (strain ATCC 29096 / DSM 1053 / JCM 10044 / NBRC 100330 / Delta H) (Methanobacterium thermoautotrophicum).